A 430-amino-acid chain; its full sequence is Enolase (430 aa).

(2R)-2-phosphoglycerate is bound at residue Q165. The Proton donor role is filled by E207. Residues D244, E287, and D314 each contribute to the Mg(2+) site. K339, R368, S369, and K390 together coordinate (2R)-2-phosphoglycerate. K339 acts as the Proton acceptor in catalysis.

It belongs to the enolase family. In terms of assembly, component of the RNA degradosome, a multiprotein complex involved in RNA processing and mRNA degradation. Mg(2+) is required as a cofactor.

It is found in the cytoplasm. It localises to the secreted. The protein resides in the cell surface. The catalysed reaction is (2R)-2-phosphoglycerate = phosphoenolpyruvate + H2O. It functions in the pathway carbohydrate degradation; glycolysis; pyruvate from D-glyceraldehyde 3-phosphate: step 4/5. Its function is as follows. Catalyzes the reversible conversion of 2-phosphoglycerate (2-PG) into phosphoenolpyruvate (PEP). It is essential for the degradation of carbohydrates via glycolysis. This Xanthomonas axonopodis pv. citri (strain 306) protein is Enolase.